A 302-amino-acid polypeptide reads, in one-letter code: Large ribosomal subunit protein uL3c (302 aa).

A chloroplast-targeting transit peptide spans 1–36; sequence MFQSSRLVALGLCAALVLVGGSIILSGLSPNLSSPM. The disordered stretch occupies residues 208–239; that stretch reads FQGSIRRWGMKRGPMSHGSKSHRQHGSIGCSA.

It belongs to the universal ribosomal protein uL3 family. In terms of assembly, part of the 50S ribosomal subunit.

Its subcellular location is the plastid. The protein localises to the chloroplast. One of the primary rRNA binding proteins, it binds directly near the 3'-end of the 23S rRNA, where it nucleates assembly of the 50S subunit. The chain is Large ribosomal subunit protein uL3c (RPL3) from Bigelowiella natans (Pedinomonas minutissima).